We begin with the raw amino-acid sequence, 352 residues long: Putative histone-lysine N-methyltransferase ASHH4 (352 aa).

Positions 60–109 (DHGIFCSCSLDPGSSTLCGSDCNCGILLSSCSSSCKCSSECTNKPFQQRH) constitute an AWS domain. In terms of domain architecture, SET spans 111 to 228 (KKMKLVQTEK…KGEQLTYDYQ (118 aa)). Residues 234–250 (ADQDCYCGAVCCRKKLG) enclose the Post-SET domain.

Belongs to the class V-like SAM-binding methyltransferase superfamily. Histone-lysine methyltransferase family. SET2 subfamily.

The protein resides in the nucleus. It localises to the chromosome. Its subcellular location is the centromere. It carries out the reaction L-lysyl-[histone] + S-adenosyl-L-methionine = N(6)-methyl-L-lysyl-[histone] + S-adenosyl-L-homocysteine + H(+). Histone methyltransferase. The protein is Putative histone-lysine N-methyltransferase ASHH4 (ASHH4) of Arabidopsis thaliana (Mouse-ear cress).